A 281-amino-acid polypeptide reads, in one-letter code: GDT1-like protein 4 (281 aa).

An N-terminal signal peptide occupies residues 1–22 (MARRVSTTRLLLLLLLVAAAAA). Transmembrane regions (helical) follow at residues 66–86 (AGLGLFDAFFASLSMILVSEI), 105–125 (TVLSGALSALVVMTILSTGLG), 137–157 (TNSAATVLYAFFGLRLLYIAW), 188–208 (IFSRFCTPIFLESFVLTFLAE), 226–246 (AVGVAVGATLGHTICTSFAVV), and 258–278 (GTVATIGGLLFLGFSLSSYFY).

This sequence belongs to the GDT1 family.

The protein localises to the membrane. This Oryza sativa subsp. indica (Rice) protein is GDT1-like protein 4.